A 176-amino-acid chain; its full sequence is Cytochrome b (176 aa).

Transmembrane regions (helical) follow at residues 33–53 (FGSL…FLAM), 77–98 (WVLR…YLHV), and 113–133 (WNVG…GYVL). The heme b site is built by His-83 and His-97.

Belongs to the cytochrome b family. As to quaternary structure, the cytochrome bc1 complex contains 11 subunits: 3 respiratory subunits (MT-CYB, CYC1 and UQCRFS1), 2 core proteins (UQCRC1 and UQCRC2) and 6 low-molecular weight proteins (UQCRH/QCR6, UQCRB/QCR7, UQCRQ/QCR8, UQCR10/QCR9, UQCR11/QCR10 and a cleavage product of UQCRFS1). This cytochrome bc1 complex then forms a dimer. Heme b serves as cofactor.

It is found in the mitochondrion inner membrane. In terms of biological role, component of the ubiquinol-cytochrome c reductase complex (complex III or cytochrome b-c1 complex) that is part of the mitochondrial respiratory chain. The b-c1 complex mediates electron transfer from ubiquinol to cytochrome c. Contributes to the generation of a proton gradient across the mitochondrial membrane that is then used for ATP synthesis. This Corynorhinus rafinesquii (Rafinesque's big-eared bat) protein is Cytochrome b (MT-CYB).